We begin with the raw amino-acid sequence, 486 residues long: Aspartyl/glutamyl-tRNA(Asn/Gln) amidotransferase subunit B (486 aa).

This sequence belongs to the GatB/GatE family. GatB subfamily. Heterotrimer of A, B and C subunits.

It catalyses the reaction L-glutamyl-tRNA(Gln) + L-glutamine + ATP + H2O = L-glutaminyl-tRNA(Gln) + L-glutamate + ADP + phosphate + H(+). The catalysed reaction is L-aspartyl-tRNA(Asn) + L-glutamine + ATP + H2O = L-asparaginyl-tRNA(Asn) + L-glutamate + ADP + phosphate + 2 H(+). Functionally, allows the formation of correctly charged Asn-tRNA(Asn) or Gln-tRNA(Gln) through the transamidation of misacylated Asp-tRNA(Asn) or Glu-tRNA(Gln) in organisms which lack either or both of asparaginyl-tRNA or glutaminyl-tRNA synthetases. The reaction takes place in the presence of glutamine and ATP through an activated phospho-Asp-tRNA(Asn) or phospho-Glu-tRNA(Gln). In Janthinobacterium sp. (strain Marseille) (Minibacterium massiliensis), this protein is Aspartyl/glutamyl-tRNA(Asn/Gln) amidotransferase subunit B.